Here is a 419-residue protein sequence, read N- to C-terminus: Serine hydroxymethyltransferase (419 aa).

Residues Leu121 and Gly125–Leu127 each bind (6S)-5,6,7,8-tetrahydrofolate. The residue at position 231 (Lys231) is an N6-(pyridoxal phosphate)lysine.

Belongs to the SHMT family. Homodimer. The cofactor is pyridoxal 5'-phosphate.

The protein resides in the cytoplasm. It carries out the reaction (6R)-5,10-methylene-5,6,7,8-tetrahydrofolate + glycine + H2O = (6S)-5,6,7,8-tetrahydrofolate + L-serine. Its pathway is one-carbon metabolism; tetrahydrofolate interconversion. It participates in amino-acid biosynthesis; glycine biosynthesis; glycine from L-serine: step 1/1. Catalyzes the reversible interconversion of serine and glycine with tetrahydrofolate (THF) serving as the one-carbon carrier. This reaction serves as the major source of one-carbon groups required for the biosynthesis of purines, thymidylate, methionine, and other important biomolecules. Also exhibits THF-independent aldolase activity toward beta-hydroxyamino acids, producing glycine and aldehydes, via a retro-aldol mechanism. In Phytoplasma mali (strain AT), this protein is Serine hydroxymethyltransferase.